Reading from the N-terminus, the 882-residue chain is Pentatricopeptide repeat-containing protein At3g03580 (882 aa).

PPR repeat units lie at residues 3–37 (TRVSSPFISRALSSSSNLNELRRIHALVISLGLDS), 38–68 (SDFFSGKLIDKYSHFREPASSLSVFRRVSPA), 70–104 (NVYLWNSIIRAFSKNGLFPEALEFYGKLRESKVSP), 105–139 (DKYTFPSVIKACAGLFDAEMGDLVYEQILDMGFES), 140–170 (DLFVGNALVDMYSRMGLLTRARQVFDEMPVR), 171–205 (DLVSWNSLISGYSSHGYYEEALEIYHELKNSWIVP), 206–240 (DSFTVSSVLPAFGNLLVVKQGQGLHGFALKSGVNS), 241–271 (VVVVNNGLVAMYLKFRRPTDARRVFDEMDVR), 272–307 (DSVSYNTMICGYLKLEMVEESVRMFLENLDQFKPDL), 309–340 (TVSSVLRACGHLRDLSLAKYIYNYMLKAGFVL), 341–371 (ESTVRNILIDVYAKCGDMITARDVFNSMECK), 372–406 (DTVSWNSIISGYIQSGDLMEAMKLFKMMMIMEEQA), 407–441 (DHITYLMLISVSTRLADLKFGKGLHSNGIKSGICI), 442–472 (DLSVSNALIDMYAKCGEVGDSLKIFSSMGTG), 473–507 (DTVTWNTVISACVRFGDFATGLQVTTQMRKSEVVP), 508–542 (DMATFLVTLPMCASLAAKRLGKEIHCCLLRFGYES), 543–573 (ELQIGNALIEMYSKCGCLENSSRVFERMSRR), 574–608 (DVVTWTGMIYAYGMYGEGEKALETFADMEKSGIVP), 609–639 (DSVVFIAIIYACSHSGLVDEGLACFEKMKTH), and 645–675 (MIEHYACVVDLLSRSQKISKAEEFIQAMPIK). The type E motif stretch occupies residues 680–755 (IWASVLRACR…NPGYSWIEVG (76 aa)). Residues 756-786 (KNVHVFSSGDDSAPQSEAIYKSLEILYSLMA) are type E(+) motif. Positions 787–882 (KEGYIPDPRE…DGTCSCKDRW (96 aa)) are type DYW motif.

This sequence belongs to the PPR family. PCMP-H subfamily.

The protein is Pentatricopeptide repeat-containing protein At3g03580 (PCMP-H23) of Arabidopsis thaliana (Mouse-ear cress).